Consider the following 436-residue polypeptide: MKRKRIDIITLGCSKNLVDSEQLMRQLEEAGYSVTHDTENPEGEIAVINTCGFIGDAKEESINMILEFAERKEEGDLKKLFVMGCLSERYLQELAIEIPQVDKFYGKFNWKELLQDLGKTYHEELYIERTLTTPKHYAYLKISEGCDRKCSYCAIPIITGRHISKSMEEILDEVRYLVSQGVKEFQVIAQELTYYGVDLYKKQMLPELIERISEIPGVEWIRLHYAYPAHFPTDLFRVMRERDNVCKYMDIALQHISDNMLKLMRRQVSKEDTYKLIEQFRKEVPGIHLRTTLMVGHPGETEEDFEELKEFVRKARFDRMGAFAYSEEEGTYAAQQYEDSIPQEVKQARLDELMDIQQGISAELSAAKIGQQMKVIIDRIEGDYYIGRTEFDSPEVDPEVLISVSREELEVGQFYQVEVTDADDFDLYAKILNKYE.

The MTTase N-terminal domain maps to 4–122; it reads KRIDIITLGC…LLQDLGKTYH (119 aa). The [4Fe-4S] cluster site is built by cysteine 13, cysteine 51, cysteine 85, cysteine 146, cysteine 150, and cysteine 153. One can recognise a Radical SAM core domain in the interval 132–363; that stretch reads TTPKHYAYLK…MDIQQGISAE (232 aa). In terms of domain architecture, TRAM spans 366–433; the sequence is AAKIGQQMKV…DFDLYAKILN (68 aa).

The protein belongs to the methylthiotransferase family. RimO subfamily. The cofactor is [4Fe-4S] cluster.

Its subcellular location is the cytoplasm. It catalyses the reaction L-aspartate(89)-[ribosomal protein uS12]-hydrogen + (sulfur carrier)-SH + AH2 + 2 S-adenosyl-L-methionine = 3-methylsulfanyl-L-aspartate(89)-[ribosomal protein uS12]-hydrogen + (sulfur carrier)-H + 5'-deoxyadenosine + L-methionine + A + S-adenosyl-L-homocysteine + 2 H(+). Catalyzes the methylthiolation of an aspartic acid residue of ribosomal protein uS12. This is Ribosomal protein uS12 methylthiotransferase RimO from Bacteroides thetaiotaomicron (strain ATCC 29148 / DSM 2079 / JCM 5827 / CCUG 10774 / NCTC 10582 / VPI-5482 / E50).